Here is a 777-residue protein sequence, read N- to C-terminus: Protein translocase subunit SecA (777 aa).

Residues Gln94, 112–116, and Asp501 contribute to the ATP site; that span reads GEGKT.

Belongs to the SecA family. Monomer and homodimer. Part of the essential Sec protein translocation apparatus which comprises SecA, SecYEG and auxiliary proteins SecDF. Other proteins may also be involved.

The protein resides in the cell membrane. It is found in the cytoplasm. It carries out the reaction ATP + H2O + cellular proteinSide 1 = ADP + phosphate + cellular proteinSide 2.. Functionally, part of the Sec protein translocase complex. Interacts with the SecYEG preprotein conducting channel. Has a central role in coupling the hydrolysis of ATP to the transfer of proteins into and across the cell membrane, serving as an ATP-driven molecular motor driving the stepwise translocation of polypeptide chains across the membrane. This chain is Protein translocase subunit SecA, found in Mycobacterium avium (strain 104).